Reading from the N-terminus, the 87-residue chain is uncharacterized protein (87 aa).

This sequence to B.subtilis XkdR.

This is an uncharacterized protein from Bacillus subtilis (strain 168).